Consider the following 708-residue polypeptide: Serine/threonine-protein kinase Nek5 (708 aa).

The region spanning 4-259 (YDVIKAIGQG…INSILKRPFL (256 aa)) is the Protein kinase domain. ATP-binding positions include 10–18 (IGQGAFGKA) and Lys33. Asp128 serves as the catalytic Proton acceptor. Disordered regions lie at residues 376 to 403 (SYHP…PSQW) and 423 to 454 (KQLG…FQEL). Residues 440–454 (QELRSNGEEPRFQEL) show a composition bias toward basic and acidic residues.

It belongs to the protein kinase superfamily. NEK Ser/Thr protein kinase family. NIMA subfamily. Mg(2+) serves as cofactor.

It localises to the cell projection. Its subcellular location is the cilium. The protein localises to the flagellum. The enzyme catalyses L-seryl-[protein] + ATP = O-phospho-L-seryl-[protein] + ADP + H(+). It catalyses the reaction L-threonyl-[protein] + ATP = O-phospho-L-threonyl-[protein] + ADP + H(+). The chain is Serine/threonine-protein kinase Nek5 (NEK5) from Homo sapiens (Human).